A 386-amino-acid polypeptide reads, in one-letter code: S-adenosylmethionine synthase (386 aa).

A Mg(2+)-binding site is contributed by Glu-8. His-14 lines the ATP pocket. Glu-42 is a binding site for K(+). L-methionine is bound by residues Glu-55 and Gln-98. Residues 166-168, 234-237, Asp-245, 251-252, Ala-268, Lys-272, and Lys-276 each bind ATP; these read DGK, SGRF, and RK. Asp-245 contacts L-methionine. Lys-276 lines the L-methionine pocket.

The protein belongs to the AdoMet synthase family. Homotetramer. Mn(2+) serves as cofactor. Requires Mg(2+) as cofactor. Co(2+) is required as a cofactor. It depends on K(+) as a cofactor.

The protein localises to the cytoplasm. It catalyses the reaction L-methionine + ATP + H2O = S-adenosyl-L-methionine + phosphate + diphosphate. The protein operates within amino-acid biosynthesis; S-adenosyl-L-methionine biosynthesis; S-adenosyl-L-methionine from L-methionine: step 1/1. Its function is as follows. Catalyzes the formation of S-adenosylmethionine from methionine and ATP. The reaction comprises two steps that are both catalyzed by the same enzyme: formation of S-adenosylmethionine (AdoMet) and triphosphate, and subsequent hydrolysis of the triphosphate. The protein is S-adenosylmethionine synthase (METK) of Ostreococcus tauri.